Reading from the N-terminus, the 378-residue chain is Glutamate 5-kinase (378 aa).

K20 lines the ATP pocket. Substrate-binding residues include S60, D147, and N159. Residues 179–180 (TD) and 221–227 (TGGMLTK) each bind ATP. Residues 286-364 (RGRVVLDAGA…SQIARILGSM (79 aa)) form the PUA domain.

It belongs to the glutamate 5-kinase family.

The protein localises to the cytoplasm. It catalyses the reaction L-glutamate + ATP = L-glutamyl 5-phosphate + ADP. Its pathway is amino-acid biosynthesis; L-proline biosynthesis; L-glutamate 5-semialdehyde from L-glutamate: step 1/2. Its function is as follows. Catalyzes the transfer of a phosphate group to glutamate to form L-glutamate 5-phosphate. This is Glutamate 5-kinase from Bordetella petrii (strain ATCC BAA-461 / DSM 12804 / CCUG 43448).